The sequence spans 1153 residues: ATP-dependent helicase/deoxyribonuclease subunit B (1153 aa).

One can recognise a UvrD-like helicase ATP-binding domain in the interval 1-289; the sequence is MELNAYIGRA…KHLEQNFNAL (289 aa). 8–15 is a binding site for ATP; the sequence is GRAGTGKS. Residues 269–583 enclose the UvrD-like helicase C-terminal domain; the sequence is LDVQRFIHND…SIGTMDLAKV (315 aa). [4Fe-4S] cluster-binding residues include C784, C1110, C1113, and C1119.

Belongs to the helicase family. AddB/RexB type 1 subfamily. Heterodimer of AddA and AddB. Requires Mg(2+) as cofactor. [4Fe-4S] cluster serves as cofactor.

The heterodimer acts as both an ATP-dependent DNA helicase and an ATP-dependent, dual-direction single-stranded exonuclease. Recognizes the chi site generating a DNA molecule suitable for the initiation of homologous recombination. The AddB subunit has 5' -&gt; 3' nuclease activity but not helicase activity. This chain is ATP-dependent helicase/deoxyribonuclease subunit B, found in Staphylococcus saprophyticus subsp. saprophyticus (strain ATCC 15305 / DSM 20229 / NCIMB 8711 / NCTC 7292 / S-41).